Consider the following 236-residue polypeptide: Snake venom serine protease ussurin (236 aa).

Residues 1–227 (VIGGVECNIN…YTDWIQSIIS (227 aa)) enclose the Peptidase S1 domain. A disulfide bond links C28 and C44. Active-site charge relay system residues include H43 and D88. 2 N-linked (GlcNAc...) asparagine glycosylation sites follow: N99 and N100. Disulfide bonds link C120–C188, C152–C167, and C178–C203. S182 serves as the catalytic Charge relay system.

This sequence belongs to the peptidase S1 family. Snake venom subfamily. Monomer. Expressed by the venom gland.

It localises to the secreted. Its function is as follows. Snake venom serine protease that may act in the hemostasis system of the prey. This chain is Snake venom serine protease ussurin, found in Gloydius ussuriensis (Ussuri mamushi).